The chain runs to 478 residues: Glutamyl-tRNA(Gln) amidotransferase subunit A 2 (478 aa).

Catalysis depends on charge relay system residues K79 and S154. The Acyl-ester intermediate role is filled by S178.

This sequence belongs to the amidase family. GatA subfamily. Heterotrimer of A, B and C subunits.

The enzyme catalyses L-glutamyl-tRNA(Gln) + L-glutamine + ATP + H2O = L-glutaminyl-tRNA(Gln) + L-glutamate + ADP + phosphate + H(+). Functionally, allows the formation of correctly charged Gln-tRNA(Gln) through the transamidation of misacylated Glu-tRNA(Gln) in organisms which lack glutaminyl-tRNA synthetase. The reaction takes place in the presence of glutamine and ATP through an activated gamma-phospho-Glu-tRNA(Gln). This is Glutamyl-tRNA(Gln) amidotransferase subunit A 2 (gatA2) from Clostridium acetobutylicum (strain ATCC 824 / DSM 792 / JCM 1419 / IAM 19013 / LMG 5710 / NBRC 13948 / NRRL B-527 / VKM B-1787 / 2291 / W).